Here is a 529-residue protein sequence, read N- to C-terminus: Bifunctional purine biosynthesis protein PurH (529 aa).

Positions 2 to 149 (TNLVPVGRAL…KNHRFVNVVT (148 aa)) constitute an MGS-like domain.

Belongs to the PurH family.

The catalysed reaction is (6R)-10-formyltetrahydrofolate + 5-amino-1-(5-phospho-beta-D-ribosyl)imidazole-4-carboxamide = 5-formamido-1-(5-phospho-D-ribosyl)imidazole-4-carboxamide + (6S)-5,6,7,8-tetrahydrofolate. The enzyme catalyses IMP + H2O = 5-formamido-1-(5-phospho-D-ribosyl)imidazole-4-carboxamide. It participates in purine metabolism; IMP biosynthesis via de novo pathway; 5-formamido-1-(5-phospho-D-ribosyl)imidazole-4-carboxamide from 5-amino-1-(5-phospho-D-ribosyl)imidazole-4-carboxamide (10-formyl THF route): step 1/1. The protein operates within purine metabolism; IMP biosynthesis via de novo pathway; IMP from 5-formamido-1-(5-phospho-D-ribosyl)imidazole-4-carboxamide: step 1/1. This chain is Bifunctional purine biosynthesis protein PurH, found in Cereibacter sphaeroides (strain ATCC 17025 / ATH 2.4.3) (Rhodobacter sphaeroides).